Here is a 148-residue protein sequence, read N- to C-terminus: Antigen GM6 (148 aa).

Residues 1-22 form a disordered region; that stretch reads KLKASDSRSFLDPMPEGVPLSE. A run of 2 repeats spans residues 1 to 68 and 69 to 136. The 3; truncated repeat unit spans residues 137 to 148; the sequence is KLKASDSRSFQS.

It is found in the cytoplasm. Its subcellular location is the cytoskeleton. The sequence is that of Antigen GM6 (GM6) from Trypanosoma brucei gambiense.